A 410-amino-acid chain; its full sequence is Peptidase T (410 aa).

A Zn(2+)-binding site is contributed by His78. Residue Asp80 is part of the active site. Residue Asp140 participates in Zn(2+) binding. Glu173 acts as the Proton acceptor in catalysis. Residues Glu174, Asp196, and His379 each coordinate Zn(2+).

The protein belongs to the peptidase M20B family. Requires Zn(2+) as cofactor.

The protein resides in the cytoplasm. It catalyses the reaction Release of the N-terminal residue from a tripeptide.. Cleaves the N-terminal amino acid of tripeptides. In Pectobacterium atrosepticum (strain SCRI 1043 / ATCC BAA-672) (Erwinia carotovora subsp. atroseptica), this protein is Peptidase T.